The sequence spans 389 residues: Alpha-(1,3)-fucosyltransferase 7 (389 aa).

The Cytoplasmic portion of the chain corresponds to 1-55 (MPTPCPPACLSTPGTHRLLPFPDWKAPSWESRKEATCNSSSPGPWAEPTVQGYHP). The chain crosses the membrane as a helical; Signal-anchor for type II membrane protein span at residues 56–78 (TRRLRAWGGLAGGATFMVIWFFW). Topologically, residues 79–389 (LWGSAPGSAP…YEDLESWFQA (311 aa)) are lumenal. Cysteines 115 and 123 form a disulfide. Asn128 carries N-linked (GlcNAc...) asparagine glycosylation. An intrachain disulfide couples Cys258 to Cys261. Residue Asn338 is glycosylated (N-linked (GlcNAc...) asparagine). A disulfide bond links Cys365 and Cys368.

It belongs to the glycosyltransferase 10 family. Post-translationally, N-glycosylated. In terms of tissue distribution, highly expressed in lung and bone marrow and to a much lesser extent in spleen, salivary gland and skeletal muscle.

It localises to the golgi apparatus. The protein resides in the golgi stack membrane. It catalyses the reaction an N-acetyl-alpha-neuraminyl-(2-&gt;3)-beta-D-galactosyl-(1-&gt;4)-N-acetyl-beta-D-glucosaminyl derivative + GDP-beta-L-fucose = an alpha-Neu5Ac-(2-&gt;3)-beta-D-Gal-(1-&gt;4)-[alpha-L-Fuc-(1-&gt;3)]-beta-D-GlcNAc derivative + GDP + H(+). The enzyme catalyses an alpha-Neu5Ac-(2-&gt;3)-beta-D-Gal-(1-&gt;4)-beta-D-GlcNAc6S derivative + GDP-beta-L-fucose = an alpha-Neu5Ac-(2-&gt;3)-beta-D-Gal-(1-&gt;4)-[alpha-L-Fuc-(1-&gt;3)]-beta-D-GlcNAc6S derivative + GDP + H(+). It carries out the reaction a neolactoside IV(3)-alpha-NeuAc-nLc4Cer + GDP-beta-L-fucose = a neolactoside IV(3)-alpha-NeuNAc,III(3)-alpha-Fuc-nLc4Cer + GDP + H(+). The catalysed reaction is a neolactoside VI(3)-alpha-NeuNAc-nLc6Cer + GDP-beta-L-fucose = a neolactoside VI(3)-alpha-NeuAc,V(3)-alphaFuc-nLc6Cer + GDP + H(+). It catalyses the reaction an alpha-Neu5Ac-(2-&gt;3)-beta-D-Gal-(1-&gt;4)-beta-D-GlcNAc-(1-&gt;3)-beta-D-Gal-(1-&gt;4)-[alpha-L-Fuc-(1-&gt;3)]-beta-D-GlcNAc derivative + GDP-beta-L-fucose = an alpha-Neu5Ac-(2-&gt;3)-beta-D-Gal-(1-&gt;4)-[alpha-L-Fuc-(1-&gt;3)]-beta-D-GlcNAc-(1-&gt;3)-beta-D-Gal-(1-&gt;4)-[alpha-L-Fuc-(1-&gt;3)]-beta-D-GlcNAc derivative + GDP + H(+). The enzyme catalyses alpha-Neu5Ac-(2-&gt;3)-beta-D-Gal-(1-&gt;4)-beta-D-GlcNAc-(1-&gt;3)-beta-D-Gal-(1-&gt;4)-D-Glc + GDP-beta-L-fucose = alpha-Neu5Ac-(2-&gt;3)-beta-D-Gal-(1-&gt;4)-[alpha-L-Fuc-(1-&gt;3)]-beta-D-GlcNAc-(1-&gt;3)-beta-D-Gal-(1-&gt;4)-D-Glc + GDP + H(+). It carries out the reaction alpha-Neu5Ac-(2-&gt;3)-beta-D-Gal-(1-&gt;4)-beta-D-GlcNAc-(1-&gt;3)-beta-D-Gal-(1-&gt;4)-[alpha-L-Fuc-(1-&gt;3)]-beta-D-GlcNAc-(1-&gt;3)-beta-D-Gal-(1-&gt;4)-beta-D-GlcNAc + GDP-beta-L-fucose = alpha-Neu5Ac-(2-&gt;3)-beta-D-Gal-(1-&gt;4)-[alpha-L-Fuc-(1-&gt;3)]-beta-D-GlcNAc-(1-&gt;3)-beta-D-Gal-(1-&gt;4)-[alpha-L-Fuc-(1-&gt;3)]-beta-D-GlcNAc-(1-&gt;3)-beta-D-Gal-(1-&gt;4)-beta-D-GlcNAc + GDP + H(+). The catalysed reaction is alpha-Neu5Ac-(2-&gt;3)-beta-D-Gal-(1-&gt;4)-beta-D-GlcNAc-(1-&gt;3)-beta-D-Gal-(1-&gt;4)-beta-D-GlcNAc-(1-&gt;3)-beta-D-Gal-(1-&gt;4)-beta-D-GlcNAc + GDP-beta-L-fucose = alpha-Neu5Ac-(2-&gt;3)-beta-D-Gal-(1-&gt;4)-[alpha-L-Fuc-(1-&gt;3)]-beta-D-GlcNAc-(1-&gt;3)-beta-D-Gal-(1-&gt;4)-beta-D-GlcNAc-(1-&gt;3)-beta-D-Gal-(1-&gt;4)-beta-D-GlcNAc + GDP + H(+). It functions in the pathway protein modification; protein glycosylation. Inhibited by NaCl. Inhibited by GDP in a concentration dependent manner, with an IC(50) value of 93 uM. Also inhibited by GMP and GTP. Inhibited by N-ethylmaleimide. Activated by poly(ethylene glycol) by enhancing the thermal stability of FUT7. Activated by Mn2+, Ca2+, and Mg2+. Both panosialin A and B inhibit activity with IC(50) values of 4.8 and 5.3 ug/ml, respectively. Inhibited by gallic acid (GA) and (-)-epigallocatechin gallate (EGCG) in a time-dependent and irreversible manner with IC(50) values of 60 and 700 nM, respectively. Its function is as follows. Catalyzes the transfer of L-fucose, from a guanosine diphosphate-beta-L-fucose, to the N-acetyl glucosamine (GlcNAc) of a distal alpha2,3 sialylated lactosamine unit of a glycoprotein or a glycolipid-linked sialopolylactosamines chain through an alpha-1,3 glycosidic linkage and participates in the final fucosylation step in the biosynthesis of the sialyl Lewis X (sLe(x)), a carbohydrate involved in cell and matrix adhesion during leukocyte trafficking and fertilization. In vitro, also synthesizes sialyl-dimeric-Lex structures, from VIM-2 structures and both di-fucosylated and trifucosylated structures from mono-fucosylated precursors. However does not catalyze alpha 1-3 fucosylation when an internal alpha 1-3 fucosylation is present in polylactosamine chain and the fucosylation rate of the internal GlcNAc residues is reduced once fucose has been added to the distal GlcNAc. Also catalyzes the transfer of a fucose from GDP-beta-fucose to the 6-sulfated a(2,3)sialylated substrate to produce 6-sulfo sLex mediating significant L-selectin-dependent cell adhesion. Through sialyl-Lewis(x) biosynthesis, can control SELE- and SELP-mediated cell adhesion with leukocytes and allows leukocytes tethering and rolling along the endothelial tissue thereby enabling the leukocytes to accumulate at a site of inflammation. May enhance embryo implantation through sialyl Lewis X (sLeX)-mediated adhesion of embryo cells to endometrium. May affect insulin signaling by up-regulating the phosphorylation and expression of some signaling molecules involved in the insulin-signaling pathway through SLe(x) which is present on the glycans of the INSRR alpha subunit. The protein is Alpha-(1,3)-fucosyltransferase 7 of Mus musculus (Mouse).